The following is a 303-amino-acid chain: Pyridoxal 5'-phosphate synthase subunit PdxS (303 aa).

D-ribose 5-phosphate is bound at residue Asp-33. The active-site Schiff-base intermediate with D-ribose 5-phosphate is the Lys-90. D-ribose 5-phosphate is bound at residue Gly-162. Residue Arg-174 coordinates D-glyceraldehyde 3-phosphate. Residues Gly-223 and 244-245 contribute to the D-ribose 5-phosphate site; that span reads GS.

This sequence belongs to the PdxS/SNZ family. In the presence of PdxT, forms a dodecamer of heterodimers.

The enzyme catalyses aldehydo-D-ribose 5-phosphate + D-glyceraldehyde 3-phosphate + L-glutamine = pyridoxal 5'-phosphate + L-glutamate + phosphate + 3 H2O + H(+). It functions in the pathway cofactor biosynthesis; pyridoxal 5'-phosphate biosynthesis. Its function is as follows. Catalyzes the formation of pyridoxal 5'-phosphate from ribose 5-phosphate (RBP), glyceraldehyde 3-phosphate (G3P) and ammonia. The ammonia is provided by the PdxT subunit. Can also use ribulose 5-phosphate and dihydroxyacetone phosphate as substrates, resulting from enzyme-catalyzed isomerization of RBP and G3P, respectively. This is Pyridoxal 5'-phosphate synthase subunit PdxS from Mycobacterium avium (strain 104).